The sequence spans 762 residues: 5-methyltetrahydropteroyltriglutamate--homocysteine methyltransferase (762 aa).

Residues 17–20 and Lys-111 contribute to the 5-methyltetrahydropteroyltri-L-glutamate site; that span reads REWK. Residues 435-437 and Glu-488 each bind L-homocysteine; that span reads IGS. Residues 435-437 and Glu-488 contribute to the L-methionine site; that span reads IGS. 5-methyltetrahydropteroyltri-L-glutamate is bound by residues 519–520 and Trp-565; that span reads RC. Position 603 (Asp-603) interacts with L-homocysteine. Asp-603 contacts L-methionine. Residue Glu-609 coordinates 5-methyltetrahydropteroyltri-L-glutamate. 3 residues coordinate Zn(2+): His-645, Cys-647, and Glu-669. His-698 serves as the catalytic Proton donor. Residue Cys-730 participates in Zn(2+) binding.

This sequence belongs to the vitamin-B12 independent methionine synthase family. Requires Zn(2+) as cofactor.

It catalyses the reaction 5-methyltetrahydropteroyltri-L-glutamate + L-homocysteine = tetrahydropteroyltri-L-glutamate + L-methionine. It participates in amino-acid biosynthesis; L-methionine biosynthesis via de novo pathway; L-methionine from L-homocysteine (MetE route): step 1/1. Functionally, catalyzes the transfer of a methyl group from 5-methyltetrahydrofolate to homocysteine resulting in methionine formation. This is 5-methyltetrahydropteroyltriglutamate--homocysteine methyltransferase from Bacillus cereus (strain ATCC 10987 / NRS 248).